The sequence spans 357 residues: Holliday junction branch migration complex subunit RuvB (357 aa).

The span at 1–15 (MAIQSDSLSSLPDSP) shows a compositional bias: low complexity. The segment at 1 to 30 (MAIQSDSLSSLPDSPRIVAPQPVSPNEESI) is disordered. The segment at 13–195 (DSPRIVAPQP…FGIVSRLEFY (183 aa)) is large ATPase domain (RuvB-L). ATP-binding positions include Leu-34, Arg-35, Gly-76, Lys-79, Thr-80, Thr-81, 142–144 (EDF), Arg-185, Tyr-195, and Arg-232. Thr-80 serves as a coordination point for Mg(2+). The tract at residues 196 to 266 (NTDELARIVT…AAGRALAMLD (71 aa)) is small ATPAse domain (RuvB-S). Positions 269-357 (PQGLDVMDRK…SGGTGELFSK (89 aa)) are head domain (RuvB-H). DNA is bound by residues Arg-305, Arg-324, and Arg-329.

Belongs to the RuvB family. Homohexamer. Forms an RuvA(8)-RuvB(12)-Holliday junction (HJ) complex. HJ DNA is sandwiched between 2 RuvA tetramers; dsDNA enters through RuvA and exits via RuvB. An RuvB hexamer assembles on each DNA strand where it exits the tetramer. Each RuvB hexamer is contacted by two RuvA subunits (via domain III) on 2 adjacent RuvB subunits; this complex drives branch migration. In the full resolvosome a probable DNA-RuvA(4)-RuvB(12)-RuvC(2) complex forms which resolves the HJ.

The protein localises to the cytoplasm. It catalyses the reaction ATP + H2O = ADP + phosphate + H(+). The RuvA-RuvB-RuvC complex processes Holliday junction (HJ) DNA during genetic recombination and DNA repair, while the RuvA-RuvB complex plays an important role in the rescue of blocked DNA replication forks via replication fork reversal (RFR). RuvA specifically binds to HJ cruciform DNA, conferring on it an open structure. The RuvB hexamer acts as an ATP-dependent pump, pulling dsDNA into and through the RuvAB complex. RuvB forms 2 homohexamers on either side of HJ DNA bound by 1 or 2 RuvA tetramers; 4 subunits per hexamer contact DNA at a time. Coordinated motions by a converter formed by DNA-disengaged RuvB subunits stimulates ATP hydrolysis and nucleotide exchange. Immobilization of the converter enables RuvB to convert the ATP-contained energy into a lever motion, pulling 2 nucleotides of DNA out of the RuvA tetramer per ATP hydrolyzed, thus driving DNA branch migration. The RuvB motors rotate together with the DNA substrate, which together with the progressing nucleotide cycle form the mechanistic basis for DNA recombination by continuous HJ branch migration. Branch migration allows RuvC to scan DNA until it finds its consensus sequence, where it cleaves and resolves cruciform DNA. This Bordetella bronchiseptica (strain ATCC BAA-588 / NCTC 13252 / RB50) (Alcaligenes bronchisepticus) protein is Holliday junction branch migration complex subunit RuvB.